Consider the following 287-residue polypeptide: Shikimate dehydrogenase (NADP(+)) (287 aa).

Shikimate is bound by residues S20–S22 and T67. The Proton acceptor role is filled by K71. E84 lines the NADP(+) pocket. Residues N93 and D108 each coordinate shikimate. NADP(+) is bound by residues G132 to A136 and M226. Y228 is a shikimate binding site. Residue G250 coordinates NADP(+).

This sequence belongs to the shikimate dehydrogenase family. In terms of assembly, homodimer.

It catalyses the reaction shikimate + NADP(+) = 3-dehydroshikimate + NADPH + H(+). Its pathway is metabolic intermediate biosynthesis; chorismate biosynthesis; chorismate from D-erythrose 4-phosphate and phosphoenolpyruvate: step 4/7. Involved in the biosynthesis of the chorismate, which leads to the biosynthesis of aromatic amino acids. Catalyzes the reversible NADPH linked reduction of 3-dehydroshikimate (DHSA) to yield shikimate (SA). This chain is Shikimate dehydrogenase (NADP(+)), found in Bordetella petrii (strain ATCC BAA-461 / DSM 12804 / CCUG 43448).